The chain runs to 876 residues: Phosphoenolpyruvate carboxylase (876 aa).

Catalysis depends on residues histidine 138 and lysine 543.

The protein belongs to the PEPCase type 1 family. The cofactor is Mg(2+).

It catalyses the reaction oxaloacetate + phosphate = phosphoenolpyruvate + hydrogencarbonate. In terms of biological role, forms oxaloacetate, a four-carbon dicarboxylic acid source for the tricarboxylic acid cycle. The chain is Phosphoenolpyruvate carboxylase from Aliivibrio salmonicida (strain LFI1238) (Vibrio salmonicida (strain LFI1238)).